A 279-amino-acid polypeptide reads, in one-letter code: Eukaryotic translation initiation factor 3 subunit G (279 aa).

Disordered regions lie at residues Ala-69 to Glu-90 and Leu-149 to Asp-193. A Phosphoserine modification is found at Ser-77. In terms of domain architecture, RRM spans Thr-196 to Lys-275.

Belongs to the eIF-3 subunit G family. In terms of assembly, component of the eukaryotic translation initiation factor 3 (eIF-3) complex.

It localises to the cytoplasm. RNA-binding component of the eukaryotic translation initiation factor 3 (eIF-3) complex, which is involved in protein synthesis of a specialized repertoire of mRNAs and, together with other initiation factors, stimulates binding of mRNA and methionyl-tRNAi to the 40S ribosome. The eIF-3 complex specifically targets and initiates translation of a subset of mRNAs involved in cell proliferation. This subunit can bind 18S rRNA. The polypeptide is Eukaryotic translation initiation factor 3 subunit G (Lodderomyces elongisporus (strain ATCC 11503 / CBS 2605 / JCM 1781 / NBRC 1676 / NRRL YB-4239) (Yeast)).